The sequence spans 71 residues: Protein translocase subunit SecE (71 aa).

The helical transmembrane segment at 43-63 (VAGAGILAVGAIGFIIYVLLT) threads the bilayer.

Belongs to the SecE/SEC61-gamma family. In terms of assembly, component of the Sec protein translocase complex. Heterotrimer consisting of SecY (alpha), SecG (beta) and SecE (gamma) subunits. The heterotrimers can form oligomers, although 1 heterotrimer is thought to be able to translocate proteins. Interacts with the ribosome. May interact with SecDF, and other proteins may be involved.

Its subcellular location is the cell membrane. In terms of biological role, essential subunit of the Sec protein translocation channel SecYEG. Clamps together the 2 halves of SecY. May contact the channel plug during translocation. In Methanosarcina acetivorans (strain ATCC 35395 / DSM 2834 / JCM 12185 / C2A), this protein is Protein translocase subunit SecE.